Here is a 549-residue protein sequence, read N- to C-terminus: Zinc finger protein 382 (549 aa).

The tract at residues 1-105 is mediates interaction with TRIM28; the sequence is MNCHSVPLQG…DKPPTSIVII (105 aa). 2 represses transcription regions span residues 10–51 and 75–210; these read GPVS…FISV and MFPS…PEQR. Residues 12 to 83 form the KRAB domain; the sequence is VSFKDVTVDF…RMFPSQSYLE (72 aa). C2H2-type zinc fingers lie at residues 211–233, 295–317, 323–345, 351–373, 379–401, 407–429, 435–457, 463–485, 491–513, and 519–541; these read FECDECDSSFLMTEVAFPHDRAH, FQCPYCGNSFRRKSYLIEHQRIH, YICSQCGKAFRQKTALTLHEKTH, YLCVDCGKSFRQKATLTRHHKTH, YECTQCGSAFGKKSYLIDHQRTH, YQCAECGKAFIQKTTLTVHQRTH, YMCSECGKSFCQKTTLTLHQRIH, YVCSDCGKSFRQKAILTVHYRIH, NGCPQCGKAFSRKSNLIRHQKTH, and YECHECGKFFSCKSNLVAHQKTH. Residues 295 to 549 form a required for transcriptional repression activity; probably mediates sequence-specific DNA-binding region; the sequence is FQCPYCGNSF…THKAETVRFQ (255 aa).

This sequence belongs to the krueppel C2H2-type zinc-finger protein family. As to quaternary structure, interacts with TRIM28; enhances the transcriptional repressor activity. As to expression, ubiquitously expressed with higher expression in lung, kidney and testis.

The protein localises to the nucleus. Functionally, functions as a sequence-specific transcriptional repressor. This chain is Zinc finger protein 382 (Znf382), found in Rattus norvegicus (Rat).